A 443-amino-acid polypeptide reads, in one-letter code: Alpha-amylase (443 aa).

The first 24 residues, 1–24 (MHNTLFRTALLAAALGSFSHTASA), serve as a signal peptide directing secretion. Residues H114 and R196 each coordinate substrate. The Nucleophile role is filled by D198. 201–202 (KH) lines the substrate pocket. E223 (proton donor) is an active-site residue. Residues G228 and H287 each coordinate substrate.

It belongs to the glycosyl hydrolase 13 family.

It localises to the secreted. It catalyses the reaction Endohydrolysis of (1-&gt;4)-alpha-D-glucosidic linkages in polysaccharides containing three or more (1-&gt;4)-alpha-linked D-glucose units.. This Aeromonas hydrophila protein is Alpha-amylase (amyA).